We begin with the raw amino-acid sequence, 621 residues long: Zinc metalloproteinase-disintegrin-like NaMP (621 aa).

Residues 1 to 20 (MIQPLLVAICLVVFPYQGSS) form the signal peptide. Residues 21–188 (TILESGKVRD…GESDETIKKI (168 aa)) constitute a propeptide that is removed on maturation. Residues 206–402 (KHIELYMVAD…KSAQCILNDP (197 aa)) enclose the Peptidase M12B domain. Residues asparagine 225, asparagine 268, and asparagine 319 are each glycosylated (N-linked (GlcNAc...) asparagine). Cystine bridges form between cysteine 317/cysteine 397, cysteine 357/cysteine 381, cysteine 359/cysteine 364, cysteine 413/cysteine 442, cysteine 424/cysteine 437, cysteine 426/cysteine 432, cysteine 436/cysteine 459, cysteine 450/cysteine 456, cysteine 455/cysteine 481, cysteine 468/cysteine 488, cysteine 475/cysteine 507, cysteine 500/cysteine 512, cysteine 519/cysteine 569, cysteine 534/cysteine 579, cysteine 547/cysteine 557, cysteine 564/cysteine 605, and cysteine 599/cysteine 610. Zn(2+) is bound at residue histidine 342. Glutamate 343 is a catalytic residue. The Zn(2+) site is built by histidine 346 and histidine 352. A Disintegrin domain is found at 410-496 (TAICGNGFVE…ECPMNHFHMN (87 aa)). The D/ECD-tripeptide signature appears at 474–476 (DCD). An N-linked (GlcNAc...) asparagine glycan is attached at asparagine 551.

The protein belongs to the venom metalloproteinase (M12B) family. P-III subfamily. P-IIIa sub-subfamily. As to quaternary structure, monomer. It depends on Zn(2+) as a cofactor. Expressed by the venom gland.

It is found in the secreted. Functionally, snake venom zinc metalloproteinase that inhibits platelet aggregation and degrades fibrinogen. In Naja atra (Chinese cobra), this protein is Zinc metalloproteinase-disintegrin-like NaMP.